Consider the following 230-residue polypeptide: Orotidine 5'-phosphate decarboxylase (230 aa).

Substrate contacts are provided by residues D11, K34, 61 to 70 (DLKLHDIPNT), T117, R179, Q188, G208, and R209. K63 (proton donor) is an active-site residue.

Belongs to the OMP decarboxylase family. Type 1 subfamily. Homodimer.

The catalysed reaction is orotidine 5'-phosphate + H(+) = UMP + CO2. The protein operates within pyrimidine metabolism; UMP biosynthesis via de novo pathway; UMP from orotate: step 2/2. In terms of biological role, catalyzes the decarboxylation of orotidine 5'-monophosphate (OMP) to uridine 5'-monophosphate (UMP). This is Orotidine 5'-phosphate decarboxylase from Streptococcus uberis (strain ATCC BAA-854 / 0140J).